A 1693-amino-acid chain; its full sequence is uncharacterized protein (1693 aa).

WD repeat units follow at residues 1008–1042 (HHEG…YLWS), 1053–1083 (GHQE…KLWQ), 1094–1124 (GHED…RIWN), 1135–1165 (GHAD…RLWD), 1176–1206 (GHTS…RLWD), 1217–1247 (GHQN…RVWS), 1258–1288 (GHDH…RLWT), 1299–1329 (GHQK…RQWD), 1340–1370 (GHSH…RLWT), 1381–1411 (DHQG…QLWN), 1422–1452 (GHQD…RVWN), 1463–1493 (HYEK…GIWE), 1504–1534 (GHEG…RIWD), 1545–1575 (GHQS…RLWD), 1586–1616 (GHQG…RLWD), and 1627–1657 (GHGN…KLWP).

This is an uncharacterized protein from Synechocystis sp. (strain ATCC 27184 / PCC 6803 / Kazusa).